An 845-amino-acid chain; its full sequence is Protein P (845 aa).

Residues 1–179 (MPLSYQHFRK…FCGSPYSWEQ (179 aa)) are terminal protein domain (TP). The spacer stretch occupies residues 180 to 348 (ELHHGRLVIK…YCLSHLVNLL (169 aa)). Residues 349–692 (EDWGPCTEHG…YMNLYPVARQ (344 aa)) form a polymerase/reverse transcriptase domain (RT) region. The Reverse transcriptase domain maps to 359-602 (EHHIRIPRTP…YSLNFMGYVI (244 aa)). 3 residues coordinate Mg(2+): Asp431, Asp553, and Asp554.

It belongs to the hepadnaviridae P protein family.

It catalyses the reaction DNA(n) + a 2'-deoxyribonucleoside 5'-triphosphate = DNA(n+1) + diphosphate. The catalysed reaction is Endonucleolytic cleavage to 5'-phosphomonoester.. With respect to regulation, activated by host HSP70 and HSP40 in vitro to be able to bind the epsilon loop of the pgRNA. Because deletion of the RNase H region renders the protein partly chaperone-independent, the chaperones may be needed indirectly to relieve occlusion of the RNA-binding site by this domain. Inhibited by several reverse-transcriptase inhibitors: Lamivudine, Adefovir and Entecavir. In terms of biological role, multifunctional enzyme that converts the viral RNA genome into dsDNA in viral cytoplasmic capsids. This enzyme displays a DNA polymerase activity that can copy either DNA or RNA templates, and a ribonuclease H (RNase H) activity that cleaves the RNA strand of RNA-DNA heteroduplexes in a partially processive 3'- to 5'-endonucleasic mode. Neo-synthesized pregenomic RNA (pgRNA) are encapsidated together with the P protein, and reverse-transcribed inside the nucleocapsid. Initiation of reverse-transcription occurs first by binding the epsilon loop on the pgRNA genome, and is initiated by protein priming, thereby the 5'-end of (-)DNA is covalently linked to P protein. Partial (+)DNA is synthesized from the (-)DNA template and generates the relaxed circular DNA (RC-DNA) genome. After budding and infection, the RC-DNA migrates in the nucleus, and is converted into a plasmid-like covalently closed circular DNA (cccDNA). The activity of P protein does not seem to be necessary for cccDNA generation, and is presumably released from (+)DNA by host nuclear DNA repair machinery. This chain is Protein P, found in Homo sapiens (Human).